The chain runs to 1152 residues: Fork-head transcriptional regulator FHL1 (1152 aa).

The disordered stretch occupies residues 55-147 (TATNNVLPES…SEDDNNNNNN (93 aa)). Residues 64–83 (SNKKDKPIDTQDLHEDDPKA) are compositionally biased toward basic and acidic residues. Residues 87-101 (TTSNGESTSNSNSVS) are compositionally biased toward low complexity. Residues 126–135 (VPVTSNSKSL) are compositionally biased toward polar residues. One can recognise an FHA domain in the interval 171–229 (VVLGRKSNDETLQQNVDVHLSSKKAISRRHAKIFYNFGTQRFEISILGRNGAFVDNVFV). Disordered regions lie at residues 254–362 (LPSN…RKNS) and 514–557 (KKQL…PPAS). Positions 271–286 (KQFNPSDAINLRSNLY) are enriched in polar residues. Positions 296 to 307 (PKRKPQPSKKVK) are enriched in basic residues. Low complexity predominate over residues 328–358 (TTAISPTASISTSTNAATAATATTPATTTAA). Coiled-coil stretches lie at residues 449-537 (DDDE…SLAK) and 734-777 (ELYI…QKSL). Residues 659–756 (KPNISFQIMI…QREIAKAKAK (98 aa)) constitute a DNA-binding region (fork-head). Disordered stretches follow at residues 787–833 (ASPY…GTSP), 846–867 (RGNG…MNDP), 951–1010 (HEGI…VPQQ), and 1057–1152 (PAMQ…AKTE). Composition is skewed to low complexity over residues 804 to 826 (SQSS…GSTT), 851 to 863 (TPAT…SLPA), and 973 to 987 (TTTS…TTPQ). Composition is skewed to pro residues over residues 996–1006 (VKPPISTPLPQ) and 1072–1082 (TSVPVPLPVPS). Polar residues-rich tracts occupy residues 1115-1128 (SSLS…SNKP) and 1143-1152 (QATNKIAKTE).

In terms of assembly, interacts with IFH1 and TBF1.

It is found in the nucleus. In terms of biological role, in complex with IFH1, acts as a transcriptional regulator of rRNA and ribosomal protein genes. The FHL1-IFH1 complex is targeted to the ribosomal protein genes by the DNA-binding factor TBF1. The chain is Fork-head transcriptional regulator FHL1 (FHL1) from Candida albicans (strain SC5314 / ATCC MYA-2876) (Yeast).